Reading from the N-terminus, the 495-residue chain is Pleckstrin homology domain-containing family O member 2 (495 aa).

A PH domain is found at 18 to 120 (TADKAGWIKK…WIKALNEGIN (103 aa)). A phosphoserine mark is found at Ser-165 and Ser-168. A disordered region spans residues 171 to 411 (LSRLDLDVPD…ESPQHPRLPK (241 aa)). Residues 198 to 213 (QEPPRALMPPVKPSPG) show a composition bias toward pro residues. Phosphothreonine is present on Thr-233. The span at 235–244 (DSASSGANPE) shows a compositional bias: polar residues. Phosphoserine is present on residues Ser-236, Ser-238, Ser-239, Ser-274, and Ser-292. Position 296 is a phosphothreonine (Thr-296). A compositionally biased stretch (low complexity) spans 324 to 335 (SGVDASGSSQSS). Residues 336 to 350 (EAPETTSPEPTQVSV) are compositionally biased toward polar residues. Ser-395 is subject to Phosphoserine. Residues 399-411 (LLRESPQHPRLPK) show a composition bias toward basic and acidic residues. Residues 444 to 469 (CAESLLSQAVEQLRQATQVLQEMRDL) adopt a coiled-coil conformation.

This chain is Pleckstrin homology domain-containing family O member 2 (Plekho2), found in Mus musculus (Mouse).